The primary structure comprises 712 residues: Polyribonucleotide nucleotidyltransferase (712 aa).

Positions 484 and 490 each coordinate Mg(2+). The KH domain maps to proline 551–isoleucine 610. The S1 motif domain occupies glycine 620 to lysine 688. Positions alanine 689–histidine 712 are disordered.

It belongs to the polyribonucleotide nucleotidyltransferase family. Mg(2+) serves as cofactor.

The protein resides in the cytoplasm. The catalysed reaction is RNA(n+1) + phosphate = RNA(n) + a ribonucleoside 5'-diphosphate. In terms of biological role, involved in mRNA degradation. Catalyzes the phosphorolysis of single-stranded polyribonucleotides processively in the 3'- to 5'-direction. The chain is Polyribonucleotide nucleotidyltransferase from Desulfatibacillum aliphaticivorans.